A 520-amino-acid polypeptide reads, in one-letter code: Nucleobase-ascorbate transporter 1 (520 aa).

12 helical membrane passes run tyrosine 36 to glycine 56, valine 64 to threonine 84, leucine 86 to aspartate 106, alanine 129 to phenylalanine 149, serine 150 to phenylalanine 170, phenylalanine 174 to leucine 194, phenylalanine 213 to glycine 233, phenylalanine 279 to alanine 299, glycine 362 to valine 382, isoleucine 384 to leucine 404, leucine 415 to tyrosine 435, and alanine 453 to methionine 473.

This sequence belongs to the nucleobase:cation symporter-2 (NCS2) (TC 2.A.40) family. In terms of tissue distribution, expressed in cotyledons 4 days after imbibition (DAI). Expressed in the minor and major veins of cotyledons and leaves, in the shoot apex and pedicels. Expressed in the root meristems, root tips and lateral root primordia.

It is found in the membrane. This Arabidopsis thaliana (Mouse-ear cress) protein is Nucleobase-ascorbate transporter 1 (NAT1).